A 149-amino-acid polypeptide reads, in one-letter code: Protein-export protein SecB 2 (149 aa).

It belongs to the SecB family. In terms of assembly, homotetramer, a dimer of dimers. One homotetramer interacts with 1 SecA dimer.

It localises to the cytoplasm. Functionally, one of the proteins required for the normal export of preproteins out of the cell cytoplasm. It is a molecular chaperone that binds to a subset of precursor proteins, maintaining them in a translocation-competent state. It also specifically binds to its receptor SecA. In Francisella tularensis subsp. tularensis (strain FSC 198), this protein is Protein-export protein SecB 2.